Consider the following 79-residue polypeptide: Biotin synthase auxiliary protein (79 aa).

Belongs to the BsaP family. Iron-sulfur cluster serves as cofactor.

In terms of biological role, required for the activity of the biotin synthase BioB. The protein is Biotin synthase auxiliary protein of Mycobacterium bovis (strain ATCC BAA-935 / AF2122/97).